The following is a 157-amino-acid chain: Endoribonuclease YbeY (157 aa).

3 residues coordinate Zn(2+): H114, H118, and H124.

The protein belongs to the endoribonuclease YbeY family. Requires Zn(2+) as cofactor.

Its subcellular location is the cytoplasm. Single strand-specific metallo-endoribonuclease involved in late-stage 70S ribosome quality control and in maturation of the 3' terminus of the 16S rRNA. This Salmonella agona (strain SL483) protein is Endoribonuclease YbeY.